A 338-amino-acid chain; its full sequence is 5-dehydro-2-deoxygluconokinase (338 aa).

This sequence belongs to the carbohydrate kinase PfkB family.

It catalyses the reaction 5-dehydro-2-deoxy-D-gluconate + ATP = 6-phospho-5-dehydro-2-deoxy-D-gluconate + ADP + H(+). It functions in the pathway polyol metabolism; myo-inositol degradation into acetyl-CoA; acetyl-CoA from myo-inositol: step 5/7. In terms of biological role, catalyzes the phosphorylation of 5-dehydro-2-deoxy-D-gluconate (2-deoxy-5-keto-D-gluconate or DKG) to 6-phospho-5-dehydro-2-deoxy-D-gluconate (DKGP). This chain is 5-dehydro-2-deoxygluconokinase, found in Mesomycoplasma hyopneumoniae (strain 7448) (Mycoplasma hyopneumoniae).